The chain runs to 302 residues: Sulfate adenylyltransferase subunit 2 (302 aa).

The tract at residues 280–302 (RQGRAIDHDQSGSMELKKRQGYF) is disordered.

Belongs to the PAPS reductase family. CysD subfamily. As to quaternary structure, heterodimer composed of CysD, the smaller subunit, and CysN.

It catalyses the reaction sulfate + ATP + H(+) = adenosine 5'-phosphosulfate + diphosphate. The protein operates within sulfur metabolism; hydrogen sulfide biosynthesis; sulfite from sulfate: step 1/3. Functionally, with CysN forms the ATP sulfurylase (ATPS) that catalyzes the adenylation of sulfate producing adenosine 5'-phosphosulfate (APS) and diphosphate, the first enzymatic step in sulfur assimilation pathway. APS synthesis involves the formation of a high-energy phosphoric-sulfuric acid anhydride bond driven by GTP hydrolysis by CysN coupled to ATP hydrolysis by CysD. This is Sulfate adenylyltransferase subunit 2 from Vibrio cholerae serotype O1 (strain ATCC 39315 / El Tor Inaba N16961).